The chain runs to 344 residues: Phosphate acyltransferase (344 aa).

This sequence belongs to the PlsX family. In terms of assembly, homodimer. Probably interacts with PlsY.

Its subcellular location is the cytoplasm. It carries out the reaction a fatty acyl-[ACP] + phosphate = an acyl phosphate + holo-[ACP]. It participates in lipid metabolism; phospholipid metabolism. Functionally, catalyzes the reversible formation of acyl-phosphate (acyl-PO(4)) from acyl-[acyl-carrier-protein] (acyl-ACP). This enzyme utilizes acyl-ACP as fatty acyl donor, but not acyl-CoA. The sequence is that of Phosphate acyltransferase from Acaryochloris marina (strain MBIC 11017).